The primary structure comprises 240 residues: MRIERVDDTTVKLFITYSDIEARGFSREDLWSNRKRGEEFFWSMMDEINEEEDFVVEGPLWIQVHAFEKGVEVTISKSKNEDAMNMSDDDTNHQFDDQVNELLAQTLEGEESLEDLFEQRKQQKKNHQDKQQRRAHKPSNVRNIIVKFDDLEQVIDYAYHNNQNTDEFEDLLYMIDNKYYYSIHFDDSVSQEMINDSYSQLLEFAYPTDKTNIYLNDYAKIIMSHNVTSQVRKYFTDTNE.

Residues 119-132 (QRKQQKKNHQDKQQ) show a composition bias toward basic and acidic residues. Residues 119-138 (QRKQQKKNHQDKQQRRAHKP) form a disordered region.

The protein belongs to the MecA family. In terms of assembly, homodimer.

In terms of biological role, enables the recognition and targeting of unfolded and aggregated proteins to the ClpC protease or to other proteins involved in proteolysis. The sequence is that of Adapter protein MecA from Staphylococcus epidermidis (strain ATCC 35984 / DSM 28319 / BCRC 17069 / CCUG 31568 / BM 3577 / RP62A).